The chain runs to 92 residues: Small ribosomal subunit protein uS19 (92 aa).

The protein belongs to the universal ribosomal protein uS19 family.

Its function is as follows. Protein S19 forms a complex with S13 that binds strongly to the 16S ribosomal RNA. This Klebsiella pneumoniae (strain 342) protein is Small ribosomal subunit protein uS19.